Consider the following 583-residue polypeptide: Immunity-related GTPase family Q protein (583 aa).

C152 and C158 form a disulfide bridge. Residues 155-179 adopt a coiled-coil conformation; it reads SDRCEELERLQVVLRTQAEALQRLL. The LIR 1 signature appears at 186–189; that stretch reads FEVL. T203 is modified (phosphothreonine). The region spanning 223 to 409 is the IRG-type G domain; the sequence is ARLDLAVAGT…PGLGTWLQHA (187 aa). The tract at residues 322–373 is disordered; the sequence is APLVGVRTDGQGEDPPEVLEEEKAQNASDGNSGDARSEGKKAGIGDSGCTAA. Residues 332 to 341 show a composition bias toward acidic residues; the sequence is QGEDPPEVLE. An LIR 2 motif is present at residues 381 to 384; sequence WEVL.

Belongs to the TRAFAC class dynamin-like GTPase superfamily. IRG family. In terms of assembly, interacts (via LIR motif 1) with GABARAPL2. Interacts (via LIR motif 2) with MAP1LC3B/LC3B.

The protein localises to the lysosome. Its subcellular location is the cytoplasmic vesicle. The protein resides in the autophagosome. Autophagy receptor that specifically promotes clearance of misfolded MHC class I molecules by targeting them to the lysosome for degradation. Acts as a molecular adapter that specifically recognizes and binds (1) misfolded MHC class I molecules following their ubiquitination, as well as (2) autophagy-related proteins, promoting the recruitment of misfolded MHC class I molecules to autophagy machinery for degradation. Degradation of misfolded MHC class I molecules is essential to prevent accumulation of defective MHC class I complexes at the surface of CD8(+) T-cells and prevent a stronger T-cell-mediated response. In contrast to other members of the family, does not show GTPase activity. The protein is Immunity-related GTPase family Q protein (Irgq) of Mus musculus (Mouse).